The primary structure comprises 370 residues: GTPase Obg (370 aa).

The Obg domain maps to 1-159 (MKFIDEARIE…RMLRLELKVL (159 aa)). Residues 127–146 (NLHFKSSTNRAPRQKTDGKP) form a disordered region. The OBG-type G domain occupies 160–334 (ADVGLLGMPN…LCYAIYDYLA (175 aa)). GTP is bound by residues 166 to 173 (GMPNAGKS), 191 to 195 (FTTLA), 213 to 216 (DIPG), 284 to 287 (NKLD), and 315 to 317 (SAL). Residues serine 173 and threonine 193 each coordinate Mg(2+). Residues 350-370 (ADVRFRDAPPSDGGATSGGDA) are disordered.

Belongs to the TRAFAC class OBG-HflX-like GTPase superfamily. OBG GTPase family. As to quaternary structure, monomer. Mg(2+) serves as cofactor.

The protein localises to the cytoplasm. An essential GTPase which binds GTP, GDP and possibly (p)ppGpp with moderate affinity, with high nucleotide exchange rates and a fairly low GTP hydrolysis rate. Plays a role in control of the cell cycle, stress response, ribosome biogenesis and in those bacteria that undergo differentiation, in morphogenesis control. This chain is GTPase Obg, found in Burkholderia vietnamiensis (strain G4 / LMG 22486) (Burkholderia cepacia (strain R1808)).